Reading from the N-terminus, the 640-residue chain is Biosynthetic arginine decarboxylase (640 aa).

Residue K105 is modified to N6-(pyridoxal phosphate)lysine. 290-300 serves as a coordination point for substrate; the sequence is FDVGGGLAIDY.

Belongs to the Orn/Lys/Arg decarboxylase class-II family. SpeA subfamily. Mg(2+) serves as cofactor. Pyridoxal 5'-phosphate is required as a cofactor.

The catalysed reaction is L-arginine + H(+) = agmatine + CO2. Catalyzes the biosynthesis of agmatine from arginine. The sequence is that of Biosynthetic arginine decarboxylase from Vibrio vulnificus (strain CMCP6).